Here is a 132-residue protein sequence, read N- to C-terminus: Ribonuclease P protein component (132 aa).

It belongs to the RnpA family. Consists of a catalytic RNA component (M1 or rnpB) and a protein subunit.

It carries out the reaction Endonucleolytic cleavage of RNA, removing 5'-extranucleotides from tRNA precursor.. Its function is as follows. RNaseP catalyzes the removal of the 5'-leader sequence from pre-tRNA to produce the mature 5'-terminus. It can also cleave other RNA substrates such as 4.5S RNA. The protein component plays an auxiliary but essential role in vivo by binding to the 5'-leader sequence and broadening the substrate specificity of the ribozyme. The polypeptide is Ribonuclease P protein component (Marinobacter nauticus (strain ATCC 700491 / DSM 11845 / VT8) (Marinobacter aquaeolei)).